Here is a 901-residue protein sequence, read N- to C-terminus: Core protein VP3 (901 aa).

The protein belongs to the orbivirus VP3 family.

It is found in the virion. The VP3 protein is one of the five proteins (with VP1, VP4, VP6 and VP7) which form the inner capsid of the virus. The polypeptide is Core protein VP3 (Segment-3) (Bluetongue virus 10 (isolate USA) (BTV 10)).